A 143-amino-acid chain; its full sequence is UPF0201 protein PAE1632 (143 aa).

It belongs to the UPF0201 family.

The chain is UPF0201 protein PAE1632 from Pyrobaculum aerophilum (strain ATCC 51768 / DSM 7523 / JCM 9630 / CIP 104966 / NBRC 100827 / IM2).